The sequence spans 478 residues: Cysteine--tRNA ligase (478 aa).

Cysteine 29 contacts Zn(2+). The 'HIGH' region signature appears at 31-41 (VTVYDYCHLGH). Zn(2+) is bound by residues cysteine 213, histidine 238, and glutamate 242. The 'KMSKS' region motif lies at 270–274 (KMSKS). Residue lysine 273 participates in ATP binding.

It belongs to the class-I aminoacyl-tRNA synthetase family. In terms of assembly, monomer. Zn(2+) serves as cofactor.

It localises to the cytoplasm. The catalysed reaction is tRNA(Cys) + L-cysteine + ATP = L-cysteinyl-tRNA(Cys) + AMP + diphosphate. The chain is Cysteine--tRNA ligase from Synechococcus sp. (strain ATCC 27144 / PCC 6301 / SAUG 1402/1) (Anacystis nidulans).